Consider the following 441-residue polypeptide: Serine/threonine-protein phosphatase 4 regulatory subunit 2 (441 aa).

The segment covering 201–213 has biased composition (acidic residues); sequence DEEEGFFDGDEDR. Disordered stretches follow at residues 201–220, 242–348, and 364–418; these read DEEE…NKSK, INDD…LTTP, and SPSS…SQED. Positions 249–261 are enriched in polar residues; sequence NKGQNCQSDVTKN. Over residues 264-302 the composition is skewed to acidic residues; the sequence is DDEDDDDNDDDYREDGADEDDEDDDHMGSTDDDEDDDED. Residue Thr347 is modified to Phosphothreonine. The span at 388-398 shows a compositional bias: basic and acidic residues; the sequence is EDAHENHEGRS.

The protein belongs to the PPP4R2 family. Regulatory subunit (R2) of the histone H2A phosphatase complex (HTP-C) consisting of PPH3, PSY2 and PSY4. Interacts with SPT4 and SPT5.

It is found in the nucleus. In terms of biological role, regulatory subunit of the histone H2A phosphatase complex, which dephosphorylates H2AS128ph (gamma-H2A) that has been displaced from sites of DNA lesions in the double-stranded DNA break repair process. Dephosphorylation is necessary for efficient recovery from the DNA damage checkpoint. The sequence is that of Serine/threonine-protein phosphatase 4 regulatory subunit 2 (PSY4) from Saccharomyces cerevisiae (strain ATCC 204508 / S288c) (Baker's yeast).